An 89-amino-acid chain; its full sequence is HssA/B-like protein DDB_G0295685 (89 aa).

Belongs to the hssA/B family.

The sequence is that of HssA/B-like protein DDB_G0295685 from Dictyostelium discoideum (Social amoeba).